We begin with the raw amino-acid sequence, 260 residues long: Proliferating cell nuclear antigen (260 aa).

The DNA-binding element occupies 61-80 (RCDRNLSMGMNLGSMAKILK).

This sequence belongs to the PCNA family. As to quaternary structure, homotrimer. Forms a complex with activator 1 heteropentamer in the presence of ATP. Interacts with E2f. Interacts with the catalytic subunits of two DNA polymerase complexes: PolD1 from the delta complex and PolE1/DNApol-epsilon255 from the epsilon complex. As to expression, expressed at high levels in adult ovary.

It localises to the nucleus. The protein localises to the chromosome. Its subcellular location is the cytoplasm. Functionally, likely to be an auxiliary protein of DNA polymerase delta complex and is probably involved in the control of DNA replication and repair by increasing the polymerase's processibility. This is Proliferating cell nuclear antigen from Drosophila melanogaster (Fruit fly).